A 1330-amino-acid chain; its full sequence is MSRLIFEARRRLAPPSSHQGTIIIEAPPELPRVIPPSLLRRALPYLIGILIVGMIVALVATGMRVISPQTLFFPFVLLLAATALYRGNDKKMRTEEVDAERADYLRYLSVVRDNIRAQAAEQRASALWSHPDPTALASVPGSRRQWERDPHDPDFLVLRAGRHTVPLATTLRVNDTADEIDLEPVSHSALRSLLDTQRSIGDVPTGIDLTKVSPITVLGERAQVRAVLRAWIAQAVTWHDPTVLGVALAARDLEGRDWNWLKWLPHVDIPGRLDALGPARNLSTDPDELIALLGPVLADRPAFTGQPTDALRHLLIVVDDPDYDLGASPLAVGRAGVTVVHCSASAPHREQYSDPEKPILRVAHGAIERWQTGGWQPYIDAADQFSADEAAHLARRLSRWDSNPTHAGLRSAATRGASFTTLLGIEDASRLDVPALWAPRRRDEELRVPIGVTGTGEPLMFDLKDEAEGGMGPHGLMIGMTGSGKSQTLMSILLSLLTTHSAERLIVIYADFKGEAGADSFRDFPQVVAVISNMAEKKSLADRFADTLRGEVARREMLLREAGRKVQGSAFNSVLEYENAIAAGHSLPPIPTLFVVADEFTLMLADHPEYAELFDYVARKGRSFRIHILFASQTLDVGKIKDIDKNTAYRIGLKVASPSVSRQIIGVEDAYHIESGKEHKGVGFLVPAPGATPIRFRSTYVDGIYEPPQTAKAVVVQSVPEPKLFTAAAVEPDPGTVIADTDEQEPADPPRKLIATIGEQLARYGPRAPQLWLPPLDETIPLSAALARAGVGPRQWRWPLGEIDRPFEMRRDPLVFDARSSAGNMVIHGGPKSGKSTALQTFILSAASLHSPHEVSFYCLDYGGGQLRALQDLAHVGSVASALEPERIRRTFGELEQLLLSRQQREVFRDRGANGSTPDDGFGEVFLVIDNLYGFGRDNTDQFNTRNPLLARVTELVNVGLAYGIHVIITTPSWLEVPLAMRDGLGLRLELRLHDARDSNVRVVGALRRPADAVPHDQPGRGLTMAAEHFLFAAPELDAQTNPVAAINARYPGMAAPPVRLLPTNLAPHAVGELYRGPDQLVIGQREEDLAPVILDLAANPLLMVFGDARSGKTTLLRHIIRTVREHSTADRVAFTVLDRRLHLVDEPLFPDNEYTANIDRIIPAMLGLANLIEARRPPAGMSAAELSRWTFAGHTHYLIIDDVDQVPDSPAMTGPYIGQRPWTPLIGLLAQAGDLGLRVIVTGRATGSAHLLMTSPLLRRFNDLQATTLMLAGNPADSGKIRGERFARLPAGRAILLTDSDSPTYVQLINPLVDAAAVSGETQQKGSQS.

Helical transmembrane passes span 43–63 (LPYL…ATGM) and 65–85 (VISP…TALY). 3 consecutive FtsK domains span residues 456 to 662 (GEPL…SVSR), 811 to 1000 (RDPL…RDSN), and 1090 to 1280 (LAPV…ADSG). ATP contacts are provided by residues 479-486 (GMTGSGKS), 829-836 (GGPKSGKS), and 1107-1114 (GDARSGKT).

Part of the ESX-3 / type VII secretion system (T7SS), which is composed of cytosolic and membrane components. The ESX-3 membrane complex is composed of EccB3, EccC3, EccD3 and EccE3.

Its subcellular location is the cell inner membrane. In terms of biological role, part of the ESX-3 specialized secretion system, which is important for iron and zinc uptake or homeostasis. In Mycobacterium tuberculosis (strain ATCC 25618 / H37Rv), this protein is ESX-3 secretion system protein EccC3.